Here is a 606-residue protein sequence, read N- to C-terminus: Prostaglandin G/H synthase 1 (606 aa).

The first 30 residues, 1–30 (MSRSSPSLRLPVLLLLLLLLLLPPPPPVLP), serve as a signal peptide directing secretion. The EGF-like domain occupies 38–76 (PVNPCCYFPCQHQGVCVRVALDRYQCDCTRTGYSGPNCT). 4 cysteine pairs are disulfide-bonded: Cys-42/Cys-53, Cys-43/Cys-165, Cys-47/Cys-63, and Cys-65/Cys-75. N-linked (GlcNAc...) asparagine glycosylation is found at Asn-74, Asn-110, and Asn-150. His-213 (proton acceptor) is an active-site residue. Tyr-391 serves as the catalytic For cyclooxygenase activity. Residue His-394 coordinates heme b. Asn-416 carries an N-linked (GlcNAc...) asparagine glycan. A disulfide bond links Cys-575 and Cys-581.

The protein belongs to the prostaglandin G/H synthase family. In terms of assembly, homodimer. Requires heme b as cofactor.

It localises to the microsome membrane. It is found in the endoplasmic reticulum membrane. It catalyses the reaction (5Z,8Z,11Z,14Z)-eicosatetraenoate + AH2 + 2 O2 = prostaglandin H2 + A + H2O. The enzyme catalyses (5Z,8Z,11Z,14Z)-eicosatetraenoate + 2 O2 = prostaglandin G2. The catalysed reaction is prostaglandin G2 + AH2 = prostaglandin H2 + A + H2O. It carries out the reaction (9Z,12Z)-octadecadienoate + AH2 + O2 = (9R)-hydroxy-(10E,12Z)-octadecadienoate + A + H2O. It catalyses the reaction (9Z,12Z)-octadecadienoate + AH2 + O2 = (9S)-hydroxy-(10E,12Z)-octadecadienoate + A + H2O. The enzyme catalyses (9Z,12Z)-octadecadienoate + AH2 + O2 = (13S)-hydroxy-(9Z,11E)-octadecadienoate + A + H2O. The catalysed reaction is (9Z,12Z)-octadecadienoate + AH2 + O2 = (13R)-hydroxy-(9Z,11E)-octadecadienoate + A + H2O. It functions in the pathway lipid metabolism; prostaglandin biosynthesis. With respect to regulation, the cyclooxygenase activity is inhibited by nonsteroidal anti-inflammatory drugs (NSAIDs) including ibuprofen, flurbiprofen, ketoprofen, naproxen, flurbiprofen, anirolac, fenclofenac and diclofenac. Its function is as follows. Dual cyclooxygenase and peroxidase that plays an important role in the biosynthesis pathway of prostanoids, a class of C20 oxylipins mainly derived from arachidonate ((5Z,8Z,11Z,14Z)-eicosatetraenoate, AA, C20:4(n-6)), with a particular role in the inflammatory response. The cyclooxygenase activity oxygenates AA to the hydroperoxy endoperoxide prostaglandin G2 (PGG2), and the peroxidase activity reduces PGG2 to the hydroxy endoperoxide prostaglandin H2 (PGH2), the precursor of all 2-series prostaglandins and thromboxanes. This complex transformation is initiated by abstraction of hydrogen at carbon 13 (with S-stereochemistry), followed by insertion of molecular O2 to form the endoperoxide bridge between carbon 9 and 11 that defines prostaglandins. The insertion of a second molecule of O2 (bis-oxygenase activity) yields a hydroperoxy group in PGG2 that is then reduced to PGH2 by two electrons. Involved in the constitutive production of prostanoids in particular in the stomach and platelets. In gastric epithelial cells, it is a key step in the generation of prostaglandins, such as prostaglandin E2 (PGE2), which plays an important role in cytoprotection. In platelets, it is involved in the generation of thromboxane A2 (TXA2), which promotes platelet activation and aggregation, vasoconstriction and proliferation of vascular smooth muscle cells. Can also use linoleate (LA, (9Z,12Z)-octadecadienoate, C18:2(n-6)) as substrate and produce hydroxyoctadecadienoates (HODEs) in a regio- and stereospecific manner, being (9R)-HODE ((9R)-hydroxy-(10E,12Z)-octadecadienoate) and (13S)-HODE ((13S)-hydroxy-(9Z,11E)-octadecadienoate) its major products. The chain is Prostaglandin G/H synthase 1 (PTGS1) from Oryctolagus cuniculus (Rabbit).